The primary structure comprises 468 residues: MDPEDRSEIAFFDVETTVPKRGQRFAILEFGSILVCPKKLTELRSYTTLVQPADLSLISSLSVRCNGIKRDDVVLAPLFADIADTVYDILHGRIWAGHNILRFDCARIREAFAEIGRQPPEPKGAIDSLGLLTQKFGRRAGDMKMATLARYFGLGNQTHRSLDDVRMNLEVLKYCATVLFLESSLPYAHVDNSVSPETISSRRRIDASREGNTVTTSVRLPSISENSAAQPDPFNMSVLRNEMASDNHIQSDILMEEEQIEPSDVVASENTSDHEGFLTPDAMSLSNIKAMLFPFYPGSQMMKLKLLHGDSPLQLYCSYLKIRFGVNGKFLDNTGRRRLNFVVDLNPSLYSILEACDSNAQKLSVDSGSTSEWNPVVNPMKGFVNYPNARIHIATEINGDEARYATEIHQRESSGATQKLIFSNPNNEELESLLTTGSVVDAFLSLEPYDYQQKAGIRLVAKKLVIQS.

The Exonuclease domain occupies 11–172 (FFDVETTVPK…DDVRMNLEVL (162 aa)). The Mg(2+) site is built by Asp13 and Glu15. Catalysis depends on His159, which acts as the Proton donor/acceptor. Asp164 lines the Mg(2+) pocket.

Mg(2+) is required as a cofactor. As to expression, expressed in the sieve elements and phloem pole pericycle cells.

The protein localises to the cytoplasm. It is found in the nucleus. Its function is as follows. Probable exonuclease involved in enuclation of sieve elements. The polypeptide is Protein NEN1 (Arabidopsis thaliana (Mouse-ear cress)).